The following is a 239-amino-acid chain: MATPHINAEMGAFADVVLMPGDPLRAKYIAETFLEDVVQVCDVRNMFGYTGTYKGRKISVMGHGMGIPSCSIYATELIKDFGVKKIIRVGSCGAVNEDIKVRDVVIGMGACTDSKVNRIRFKGHDFAAIADYKMVRAAEDAAKARGIDVKVGNLFSAELFYTPDPEMFDVMDKYGIVGVEMEAAGIYGVAAEYGAKALTICTVSDHIKTGEQTTSDERQTTFNDMMLIALDSVLLGDAE.

Histidine 5 is an a purine D-ribonucleoside binding site. Phosphate-binding positions include glycine 21, arginine 25, arginine 44, and 88–91 (RVGS). Residues 180–182 (EME) and 204–205 (SD) contribute to the a purine D-ribonucleoside site. The Proton donor role is filled by aspartate 205.

Belongs to the PNP/UDP phosphorylase family. Homohexamer; trimer of homodimers.

It carries out the reaction a purine D-ribonucleoside + phosphate = a purine nucleobase + alpha-D-ribose 1-phosphate. The catalysed reaction is a purine 2'-deoxy-D-ribonucleoside + phosphate = a purine nucleobase + 2-deoxy-alpha-D-ribose 1-phosphate. Its function is as follows. Catalyzes the reversible phosphorolytic breakdown of the N-glycosidic bond in the beta-(deoxy)ribonucleoside molecules, with the formation of the corresponding free purine bases and pentose-1-phosphate. The sequence is that of Purine nucleoside phosphorylase DeoD-type 1 from Vibrio parahaemolyticus serotype O3:K6 (strain RIMD 2210633).